The chain runs to 500 residues: ACT domain-containing protein ACR2 (500 aa).

ACT domains lie at 39 to 121 (VVKV…EANN), 136 to 213 (AIEM…ADPA), 298 to 373 (IVTV…RVCE), and 376 to 459 (KLEL…TVGS). Residues 450–478 (EDTKIDTVGSDEPTASASATPQRQPQPHR) form a disordered region. Over residues 462-474 (PTASASATPQRQP) the composition is skewed to polar residues.

May bind amino acids. This is ACT domain-containing protein ACR2 from Arabidopsis thaliana (Mouse-ear cress).